A 191-amino-acid chain; its full sequence is Adenylate kinase (191 aa).

10 to 15 (GAGKGT) contributes to the ATP binding site. The tract at residues 30–59 (STGDMLRAARTSGTEMGNLVAGVMDRGELV) is NMP. AMP contacts are provided by residues Thr31, Arg36, 57–59 (ELV), 83–86 (GFPR), and Gln90. The tract at residues 124–140 (NRAKEAAAAGQPVRADD) is LID. Arg125 serves as a coordination point for ATP. 2 residues coordinate AMP: Arg137 and Arg148. Gly176 is an ATP binding site.

Belongs to the adenylate kinase family. As to quaternary structure, monomer.

It is found in the cytoplasm. It catalyses the reaction AMP + ATP = 2 ADP. The protein operates within purine metabolism; AMP biosynthesis via salvage pathway; AMP from ADP: step 1/1. Catalyzes the reversible transfer of the terminal phosphate group between ATP and AMP. Plays an important role in cellular energy homeostasis and in adenine nucleotide metabolism. The protein is Adenylate kinase of Jannaschia sp. (strain CCS1).